A 120-amino-acid chain; its full sequence is Large ribosomal subunit protein bL19c (120 aa).

The protein belongs to the bacterial ribosomal protein bL19 family.

The protein localises to the plastid. It is found in the chloroplast. This chain is Large ribosomal subunit protein bL19c, found in Thalassiosira weissflogii (Marine diatom).